The following is a 374-amino-acid chain: Putative heme chaperone HemW-like protein (374 aa).

The 231-residue stretch at 1 to 231 (MKLLGLYINI…EKLLKKSGYK (231 aa)) folds into the Radical SAM core domain.

It belongs to the anaerobic coproporphyrinogen-III oxidase family. HemW subfamily.

Its subcellular location is the cytoplasm. In terms of biological role, might be a heme chaperone; in E.coli heme binds independently of binding to [4Fe-4S] or S-adenosyl-L-methionine. This Buchnera aphidicola subsp. Baizongia pistaciae (strain Bp) protein is Putative heme chaperone HemW-like protein.